The following is a 619-amino-acid chain: MKKDVRILLVGEPRVGKTSLIMSLVSEEFPEEVPPRAEEITIPADVTPERVPTHIVDYSEAEQNDEQLYHEISQANVICIVYAVNNKNSIDKVTSRWIPLINERTDKDSRLPLILVGNKSDLVEYSSMETILPIMNQYTEIETCVECSAKNLKNRSELFYYAQKAVLHPTGPLYCPEEKEMKPACIKALTRIFRISDQDNDGTLNDAELNFFQRICFNTPLAPQALEDVKNVVRKNVSDGVADNGLTLKGFLFLHTLFIQRGRHETTWTVLRRFGYDDDLELTPEYLFPLLKIPPDCTTELNHHAYLFLQSIFDKHDLDRDCALSPDELKDLFKVFPYMPWGPDVNNTVCTNGKGGWITYQGFLSQWTLTTYLDVQRCLEYLGYLGYSILAEQESQASAITVTRDKKIDLQKKQTQRNVFRCNVVGMKGCGKSGVLQALLGRNLMRQRQIRAEHKSYYAINTVYVYGQEKYLLLHDVSDSEFLTDAETICDVVCLVYDVSNPKSFEYCVRIFKQHFMDSRIPCLVVAAKSDLHEVRQEYSISPAEFCKKHKMPPPQAFTCNTVDMPSKDIFVKLTTMAMYPHVTQADLKSSTFWLRASFGATVFAFLGFAMYKALIKQR.

The Cytoplasmic portion of the chain corresponds to 1 to 593 (MKKDVRILLV…TQADLKSSTF (593 aa)). The Miro 1 domain maps to 2-168 (KKDVRILLVG…FYYAQKAVLH (167 aa)). Arg14, Gly16, Lys17, Thr18, and Ser19 together coordinate GTP. Thr18 provides a ligand contact to Mg(2+). 2 residues coordinate Mg(2+): Pro35 and Asp57. Positions 59, 118, 119, 121, 149, and 150 each coordinate GTP. EF-hand domains lie at 184 to 219 (ACIK…CFNT) and 304 to 339 (HAYL…FPYM). Ca(2+) contacts are provided by Asp197, Asp199, Asp201, Thr203, Glu208, Asp317, Asp319, Asp321, Ala323, and Glu328. A Miro 2 domain is found at 417 to 580 (RNVFRCNVVG…FVKLTTMAMY (164 aa)). Gly429, Cys430, Gly431, Lys432, Ser433, Gly434, Arg448, Lys529, Asp531, Thr559, and Cys560 together coordinate GTP. A Mg(2+)-binding site is contributed by Gly429. A helical; Anchor for type IV membrane protein membrane pass occupies residues 594 to 616 (WLRASFGATVFAFLGFAMYKALI). The Mitochondrial intermembrane portion of the chain corresponds to 617–619 (KQR).

Belongs to the mitochondrial Rho GTPase family. Homodimer.

It is found in the mitochondrion outer membrane. It carries out the reaction GTP + H2O = GDP + phosphate + H(+). The enzyme catalyses ATP + H2O = ADP + phosphate + H(+). The catalysed reaction is UTP + H2O = UDP + phosphate + H(+). In terms of biological role, atypical mitochondrial nucleoside-triphosphatase (NTPase) involved in mitochondrial trafficking. Probably involved in control of anterograde transport of mitochondria and their subcellular distribution. Can hydrolyze GTP, ATP and UTP. The protein is Mitochondrial Rho GTPase 1 (RHOT1) of Gallus gallus (Chicken).